A 537-amino-acid chain; its full sequence is CTP synthase (537 aa).

Residues 1–265 (MTKFIFVTGG…GKYLIKRLKL (265 aa)) are amidoligase domain. Serine 13 lines the CTP pocket. Serine 13 lines the UTP pocket. 14-19 (GLGKGI) is an ATP binding site. An L-glutamine-binding site is contributed by tyrosine 54. Aspartate 71 contributes to the ATP binding site. The Mg(2+) site is built by aspartate 71 and glutamate 139. Residues 146–148 (DIE), 186–191 (KTKPTQ), and lysine 222 each bind CTP. UTP contacts are provided by residues 186–191 (KTKPTQ) and lysine 222. Positions 290–532 (EIAIVGKYVK…VRAAKEYKQE (243 aa)) constitute a Glutamine amidotransferase type-1 domain. L-glutamine is bound at residue glycine 351. The active-site Nucleophile; for glutamine hydrolysis is the cysteine 378. L-glutamine contacts are provided by residues 379-382 (FGFQ), glutamate 402, and arginine 459. Catalysis depends on residues histidine 505 and glutamate 507.

Belongs to the CTP synthase family. In terms of assembly, homotetramer.

The enzyme catalyses UTP + L-glutamine + ATP + H2O = CTP + L-glutamate + ADP + phosphate + 2 H(+). It catalyses the reaction L-glutamine + H2O = L-glutamate + NH4(+). It carries out the reaction UTP + NH4(+) + ATP = CTP + ADP + phosphate + 2 H(+). It participates in pyrimidine metabolism; CTP biosynthesis via de novo pathway; CTP from UDP: step 2/2. Its activity is regulated as follows. Allosterically activated by GTP, when glutamine is the substrate; GTP has no effect on the reaction when ammonia is the substrate. The allosteric effector GTP functions by stabilizing the protein conformation that binds the tetrahedral intermediate(s) formed during glutamine hydrolysis. Inhibited by the product CTP, via allosteric rather than competitive inhibition. Catalyzes the ATP-dependent amination of UTP to CTP with either L-glutamine or ammonia as the source of nitrogen. Regulates intracellular CTP levels through interactions with the four ribonucleotide triphosphates. This is CTP synthase from Pyrococcus horikoshii (strain ATCC 700860 / DSM 12428 / JCM 9974 / NBRC 100139 / OT-3).